Consider the following 309-residue polypeptide: Homoserine O-succinyltransferase (309 aa).

Cysteine 142 serves as the catalytic Acyl-thioester intermediate. 2 residues coordinate substrate: lysine 163 and serine 192. Catalysis depends on histidine 235, which acts as the Proton acceptor. Glutamate 237 is a catalytic residue. Residue arginine 249 participates in substrate binding.

This sequence belongs to the MetA family. As to quaternary structure, homodimer.

The protein localises to the cytoplasm. It catalyses the reaction L-homoserine + succinyl-CoA = O-succinyl-L-homoserine + CoA. The protein operates within amino-acid biosynthesis; L-methionine biosynthesis via de novo pathway; O-succinyl-L-homoserine from L-homoserine: step 1/1. Functionally, transfers a succinyl group from succinyl-CoA to L-homoserine, forming succinyl-L-homoserine. This is Homoserine O-succinyltransferase from Escherichia coli (strain ATCC 8739 / DSM 1576 / NBRC 3972 / NCIMB 8545 / WDCM 00012 / Crooks).